A 67-amino-acid polypeptide reads, in one-letter code: Large ribosomal subunit protein bL35 (67 aa).

The interval 22–45 (GKIKRWKSGGAHYNTKKSSKRKRH) is disordered. Positions 35 to 45 (NTKKSSKRKRH) are enriched in basic residues.

It belongs to the bacterial ribosomal protein bL35 family.

This is Large ribosomal subunit protein bL35 from Aquifex aeolicus (strain VF5).